The primary structure comprises 365 residues: Spermidine/putrescine import ATP-binding protein PotA (365 aa).

One can recognise an ABC transporter domain in the interval 9–239 (IRLTNVTKSY…PINHFVANFI (231 aa)). 41 to 48 (GPSGCGKT) provides a ligand contact to ATP.

Belongs to the ABC transporter superfamily. Spermidine/putrescine importer (TC 3.A.1.11.1) family. As to quaternary structure, the complex is composed of two ATP-binding proteins (PotA), two transmembrane proteins (PotB and PotC) and a solute-binding protein (PotD).

Its subcellular location is the cell membrane. The catalysed reaction is ATP + H2O + polyamine-[polyamine-binding protein]Side 1 = ADP + phosphate + polyamineSide 2 + [polyamine-binding protein]Side 1.. Part of the ABC transporter complex PotABCD involved in spermidine/putrescine import. Responsible for energy coupling to the transport system. This chain is Spermidine/putrescine import ATP-binding protein PotA, found in Lactiplantibacillus plantarum (strain ATCC BAA-793 / NCIMB 8826 / WCFS1) (Lactobacillus plantarum).